The primary structure comprises 291 residues: Ribosomal RNA small subunit methyltransferase H (291 aa).

Residues 31-33, Asp-49, Phe-76, Asp-97, and Gln-104 each bind S-adenosyl-L-methionine; that span reads GGY.

Belongs to the methyltransferase superfamily. RsmH family.

It localises to the cytoplasm. It catalyses the reaction cytidine(1402) in 16S rRNA + S-adenosyl-L-methionine = N(4)-methylcytidine(1402) in 16S rRNA + S-adenosyl-L-homocysteine + H(+). Its function is as follows. Specifically methylates the N4 position of cytidine in position 1402 (C1402) of 16S rRNA. This chain is Ribosomal RNA small subunit methyltransferase H, found in Anaplasma marginale (strain Florida).